The primary structure comprises 530 residues: Netrin-G2 (530 aa).

Positions 1–17 (MLHLLALFLHCLPLASG) are cleaved as a signal peptide. Disulfide bonds link Cys22–Cys39, Cys61–Cys81, and Cys69–Cys77. In terms of domain architecture, Laminin N-terminal spans 35–286 (EFYACQPKVM…AISNIEVIGR (252 aa)). The segment at 69–88 (CSHENPYLCSNECDASNPDL) is NGL discriminant loop I. Residues Asn122 and Asn128 are each glycosylated (N-linked (GlcNAc...) asparagine). A disulfide bond links Cys171 and Cys195. Positions 201–203 (RWA) are NGL discriminant loop II. The interval 264-267 (TYVQ) is NGL discriminant loop III. 15 disulfide bridges follow: Cys287-Cys296, Cys289-Cys305, Cys307-Cys316, Cys319-Cys344, Cys353-Cys362, Cys355-Cys373, Cys376-Cys385, Cys388-Cys406, Cys409-Cys421, Cys411-Cys427, Cys429-Cys438, Cys441-Cys451, Cys456-Cys469, Cys463-Cys475, and Cys477-Cys486. Laminin EGF-like domains follow at residues 287–346 (CKCN…ACAT), 353–408 (CECY…VCIE), and 409–453 (CNCN…GCYP). A glycan (N-linked (GlcNAc...) asparagine) is linked at Asn310. N-linked (GlcNAc...) asparagine glycosylation is present at Asn395. An N-linked (GlcNAc...) asparagine glycan is attached at Asn422. A lipid anchor (GPI-anchor amidated glycine) is attached at Gly507. A propeptide spans 508 to 530 (AAPRPATLLGCLLLLGLAARLGR) (removed in mature form).

In terms of assembly, interacts with LRRC4. Post-translationally, N-glycosylated.

It localises to the cell membrane. Its function is as follows. Involved in controlling patterning and neuronal circuit formation at the laminar, cellular, subcellular and synaptic levels. Promotes neurite outgrowth of both axons and dendrites. This is Netrin-G2 from Homo sapiens (Human).